The chain runs to 167 residues: Ribosome maturation factor RimM (167 aa).

Positions 94 to 166 (QNRAWLHELE…YIVVPRFDEF (73 aa)) constitute a PRC barrel domain.

The protein belongs to the RimM family. Binds ribosomal protein uS19.

The protein localises to the cytoplasm. Its function is as follows. An accessory protein needed during the final step in the assembly of 30S ribosomal subunit, possibly for assembly of the head region. Essential for efficient processing of 16S rRNA. May be needed both before and after RbfA during the maturation of 16S rRNA. It has affinity for free ribosomal 30S subunits but not for 70S ribosomes. This is Ribosome maturation factor RimM from Chlorobium phaeovibrioides (strain DSM 265 / 1930) (Prosthecochloris vibrioformis (strain DSM 265)).